A 602-amino-acid polypeptide reads, in one-letter code: Aspartate--tRNA(Asp/Asn) ligase (602 aa).

Residue E176 coordinates L-aspartate. Residues 200–203 are aspartate; sequence QQFK. The L-aspartate site is built by R222 and H452. 222–224 contacts ATP; sequence RDE. ATP is bound at residue E490. R497 contacts L-aspartate. 542-545 lines the ATP pocket; the sequence is GIDR.

The protein belongs to the class-II aminoacyl-tRNA synthetase family. Type 1 subfamily. As to quaternary structure, homodimer.

Its subcellular location is the cytoplasm. It catalyses the reaction tRNA(Asx) + L-aspartate + ATP = L-aspartyl-tRNA(Asx) + AMP + diphosphate. Its function is as follows. Aspartyl-tRNA synthetase with relaxed tRNA specificity since it is able to aspartylate not only its cognate tRNA(Asp) but also tRNA(Asn). Reaction proceeds in two steps: L-aspartate is first activated by ATP to form Asp-AMP and then transferred to the acceptor end of tRNA(Asp/Asn). In Rickettsia conorii (strain ATCC VR-613 / Malish 7), this protein is Aspartate--tRNA(Asp/Asn) ligase.